We begin with the raw amino-acid sequence, 616 residues long: Membrane protein insertase YidC (616 aa).

Residues 8–28 (MFVAIALSLVVLLGWHYFVTG) traverse the membrane as a helical segment. The disordered stretch occupies residues 33–85 (RQRQAAQSQTAQTGAPQTADGIPSPSPREGGPNAPAPGTLPGAAAQGPVSRED). Low complexity-rich tracts occupy residues 36–51 (QAAQ…PQTA) and 62–80 (GGPN…AQGP). 4 consecutive transmembrane segments (helical) span residues 386-406 (LLGN…LFFL), 460-480 (WPVL…FITI), 516-536 (YIPI…FIQM), and 551-571 (FAFM…GLVI).

It belongs to the OXA1/ALB3/YidC family. Type 1 subfamily. As to quaternary structure, interacts with the Sec translocase complex via SecD. Specifically interacts with transmembrane segments of nascent integral membrane proteins during membrane integration.

It localises to the cell inner membrane. In terms of biological role, required for the insertion and/or proper folding and/or complex formation of integral membrane proteins into the membrane. Involved in integration of membrane proteins that insert both dependently and independently of the Sec translocase complex, as well as at least some lipoproteins. Aids folding of multispanning membrane proteins. This chain is Membrane protein insertase YidC, found in Methylorubrum extorquens (strain PA1) (Methylobacterium extorquens).